The sequence spans 662 residues: Probable protein phosphatase CG10417 (662 aa).

Residues 23–564 (AVGASSMQGW…DNMTAVIVQF (542 aa)) enclose the PPM-type phosphatase domain. Mn(2+) is bound by residues Asp-57 and Gly-58. 2 disordered regions span residues 219–275 (DGVA…FKHT) and 288–374 (GSND…DEDQ). 3 stretches are compositionally biased toward polar residues: residues 238-252 (DSNTTTSINDLSTKN), 261-275 (NDQNEGSNGTDFKHT), and 288-319 (GSNDMTELNQSSKNEFTNSSTSKEFERNINSS). Ser-289 and Ser-306 each carry phosphoserine. Acidic residues predominate over residues 320–334 (QDDEFTDDDADYEEN). Residues 337–347 (VKSPDTSSAES) show a composition bias toward polar residues. The span at 349 to 374 (DCTENDDDGDEDGNEDSDEEETDEDQ) shows a compositional bias: acidic residues. Mn(2+) contacts are provided by Asp-506 and Asp-555. Positions 591 to 609 (VSHSLNDQSASKRCASQNA) are enriched in polar residues. Residues 591 to 662 (VSHSLNDQSA…KEVTIIVSSS (72 aa)) are disordered. Residues Ser-592, Ser-594, and Ser-599 each carry the phosphoserine modification. Residues 616-637 (LEKNNSKRLKTDLEQENIKDRT) are compositionally biased toward basic and acidic residues. Phosphothreonine is present on Thr-637. Residues Ser-639 and Ser-641 each carry the phosphoserine modification.

Belongs to the PP2C family. Requires Mg(2+) as cofactor. The cofactor is Mn(2+).

The catalysed reaction is O-phospho-L-seryl-[protein] + H2O = L-seryl-[protein] + phosphate. It catalyses the reaction O-phospho-L-threonyl-[protein] + H2O = L-threonyl-[protein] + phosphate. The chain is Probable protein phosphatase CG10417 from Drosophila melanogaster (Fruit fly).